We begin with the raw amino-acid sequence, 458 residues long: Ammonium transporter Rh type B (458 aa).

Residues 1–13 lie on the Cytoplasmic side of the membrane; that stretch reads MAKSPRRVAGRRL. A helical transmembrane segment spans residues 14-34; that stretch reads LLPLLCLFFQGATAILFAIFV. Residues 35 to 61 lie on the Extracellular side of the membrane; that stretch reads RYDQQTDAALWHGGNHSNADNEFYFRY. N-linked (GlcNAc...) asparagine glycosylation is present at Asn49. A helical membrane pass occupies residues 62–82; it reads PSFQDVHAMVFVGFGFLMVFL. At 83–86 the chain is on the cytoplasmic side; the sequence is QRYG. The chain crosses the membrane as a helical span at residues 87 to 107; sequence YSSLGFTFLLGAFALQWATLV. The Extracellular portion of the chain corresponds to 108-124; it reads QGFLHSFHGGHIHVGME. The chain crosses the membrane as a helical span at residues 125 to 145; sequence SLINADFCAGAVLISFGAVLG. Residues 146–149 are Cytoplasmic-facing; the sequence is KTGP. A helical membrane pass occupies residues 150 to 170; the sequence is AQLLLMALLEVALFGLNEFVL. The Extracellular portion of the chain corresponds to 171-178; sequence LCLLGVRD. Residues 179–201 form a helical membrane-spanning segment; the sequence is AGGSMTIHTFGAYFGLVLSRVLY. Topologically, residues 202 to 219 are cytoplasmic; the sequence is RPHLEKSQHRQGSVYHSD. A helical transmembrane segment spans residues 220–240; sequence LFAMIGTIFLWIFWPSFNSAL. Topologically, residues 241–251 are extracellular; the sequence is TSRGDGQPRTA. The helical transmembrane segment at 252-272 threads the bilayer; it reads LNTYYSLTASTLSTFALSALV. Residues 273-282 are Cytoplasmic-facing; that stretch reads GKDGRLDMVH. A helical transmembrane segment spans residues 283 to 303; sequence VQNAALAGGVVVGTASEMMLT. Pro304 is a topological domain (extracellular). Residues 305–325 form a helical membrane-spanning segment; it reads FGALAAGCLAGAISTLGYKFF. Residues 326–346 are Cytoplasmic-facing; that stretch reads TPILESKLKIQDTCGVHNLHG. Residues 347-367 traverse the membrane as a helical segment; sequence MPGVLGALLGALMTGLTTHEA. Over 368 to 393 the chain is Extracellular; the sequence is YGDGLQSVFPLIAEGQRSATSQAIYQ. A helical transmembrane segment spans residues 394–414; it reads LFGLSVTLLFASAGGVLGGLL. Residues 415–458 are Cytoplasmic-facing; sequence LKLPFLDAPPDSQCYEDQMCWEVPGEHGYEAQEALRVEEPDTEA. Residues 416–424 form an interaction with ANK3 region; sequence KLPFLDAPP. The Basolateral sorting signal signature appears at 429–432; it reads YEDQ.

This sequence belongs to the ammonium transporter (TC 2.A.49) family. Rh subfamily. In terms of assembly, interacts (via C-terminus) with ANK2 and ANK3; required for targeting to the basolateral membrane. In terms of processing, N-glycosylated.

It localises to the cell membrane. The protein localises to the basolateral cell membrane. The enzyme catalyses NH4(+)(in) = NH4(+)(out). The catalysed reaction is methylamine(out) = methylamine(in). It catalyses the reaction CO2(out) = CO2(in). Functionally, ammonium transporter involved in the maintenance of acid-base homeostasis. Transports ammonium and its related derivative methylammonium across the basolateral plasma membrane of epithelial cells likely contributing to renal transepithelial ammonia transport and ammonia metabolism. May transport either NH4(+) or NH3 ammonia species predominantly mediating an electrogenic NH4(+) transport. May act as a CO2 channel providing for renal acid secretion. The polypeptide is Ammonium transporter Rh type B (RHBG) (Oryctolagus cuniculus (Rabbit)).